The following is a 571-amino-acid chain: Proline--tRNA ligase 1 (571 aa).

The protein belongs to the class-II aminoacyl-tRNA synthetase family. ProS type 1 subfamily. Homodimer.

It is found in the cytoplasm. The enzyme catalyses tRNA(Pro) + L-proline + ATP = L-prolyl-tRNA(Pro) + AMP + diphosphate. Functionally, catalyzes the attachment of proline to tRNA(Pro) in a two-step reaction: proline is first activated by ATP to form Pro-AMP and then transferred to the acceptor end of tRNA(Pro). As ProRS can inadvertently accommodate and process non-cognate amino acids such as alanine and cysteine, to avoid such errors it has two additional distinct editing activities against alanine. One activity is designated as 'pretransfer' editing and involves the tRNA(Pro)-independent hydrolysis of activated Ala-AMP. The other activity is designated 'posttransfer' editing and involves deacylation of mischarged Ala-tRNA(Pro). The misacylated Cys-tRNA(Pro) is not edited by ProRS. The polypeptide is Proline--tRNA ligase 1 (Clostridioides difficile (strain 630) (Peptoclostridium difficile)).